We begin with the raw amino-acid sequence, 837 residues long: Striatin-interacting protein 1 (837 aa).

Met1 bears the N-acetylmethionine mark. Disordered regions lie at residues 1–67 (MEPA…ESPD) and 333–423 (AASP…KGLP). Over residues 18 to 35 (PQPPPPPPPAAAQPPPGA) the composition is skewed to pro residues. The span at 36–46 (PRAAAGLLPGG) shows a compositional bias: low complexity. The segment covering 47–60 (KAREFNRNQRKDSE) has biased composition (basic and acidic residues). Phosphoserine is present on residues Ser59, Ser335, and Ser339. Residues 356 to 377 (KALIKQDNLDAFNERDPYKADD) are compositionally biased toward basic and acidic residues. Residues 378 to 391 (SREEEEENDDDNSL) are compositionally biased toward acidic residues. A Phosphoserine modification is found at Ser788. The segment at 796–837 (DNCLQSVLGQRVDLPEDFQMNYDLWLEREVFSKPISWEELLQ) is required for STRIPAK core complex formation.

It belongs to the STRIP family. In terms of assembly, part of the core of STRIPAK complexes composed of PP2A catalytic and scaffolding subunits, the striatins (PP2A regulatory subunits), the striatin-associated proteins MOB4, STRIP1 and STRIP2, PDCD10 and members of the STE20 kinases, such as STK24 and STK26. The STRIPAK complex can be extended by adapter proteins such as SLMAP:SIKE1, CTTNBP2 or CTTNBP2NL. Interacts with CDC42BPB. Interacts with CTTNBP2NL.

The protein resides in the cytoplasm. Plays a role in the regulation of cell morphology and cytoskeletal organization. Required in the cortical actin filament dynamics and cell shape. Part of the striatin-interacting phosphatase and kinase (STRIPAK) complexes. STRIPAK complexes have critical roles in protein (de)phosphorylation and are regulators of multiple signaling pathways including Hippo, MAPK, nuclear receptor and cytoskeleton remodeling. Different types of STRIPAK complexes are involved in a variety of biological processes such as cell growth, differentiation, apoptosis, metabolism and immune regulation. The protein is Striatin-interacting protein 1 of Homo sapiens (Human).